The following is a 213-amino-acid chain: Ras-related protein Rab-25 (213 aa).

GTP-binding residues include Ser-21, Gly-24, Lys-25, Thr-26, Asn-27, Ser-38, His-39, Thr-43, and Thr-44. Thr-26 contributes to the Mg(2+) binding site. 2 short sequence motifs (switch) span residues 35–49 (NEFSHDSRTTIGVEF) and 67–84 (DTAGLERYRAITSAYYRG). Mg(2+) contacts are provided by Thr-44 and Asp-67. Positions 70, 125, 126, 128, 156, and 157 each coordinate GTP. Residues Cys-209 and Cys-210 are each lipidated (S-geranylgeranyl cysteine). Residue Cys-210 is modified to Cysteine methyl ester. A propeptide spans 211–213 (ISL) (removed in mature form).

This sequence belongs to the small GTPase superfamily. Rab family. In terms of assembly, interacts (GTP-bound form) with RAB11FIP1, RAB11FIP2, RAB11FIP3 and RAB11FIP4. Interacts (via the hypervariable C-terminal region) with ITGB1 (via the cytoplasmic region); the interaction is GTP-dependent. Interacts with ITGAV. Associates with the integrin alpha-V/beta-1 heterodimer. Interacts with VPS33B. The cofactor is Mg(2+).

It localises to the cell membrane. The protein localises to the cell projection. The protein resides in the pseudopodium membrane. Its subcellular location is the cytoplasmic vesicle. The enzyme catalyses GTP + H2O = GDP + phosphate + H(+). With respect to regulation, regulated by guanine nucleotide exchange factors (GEFs) which promote the exchange of bound GDP for free GTP. Regulated by GTPase activating proteins (GAPs) which increase the GTP hydrolysis activity. Inhibited by GDP dissociation inhibitors (GDIs) which prevent Rab-GDP dissociation. Its function is as follows. The small GTPases Rab are key regulators of intracellular membrane trafficking, from the formation of transport vesicles to their fusion with membranes. Rabs cycle between an inactive GDP-bound form and an active GTP-bound form that is able to recruit to membranes different set of downstream effectors directly responsible for vesicle formation, movement, tethering and fusion. RAB25 regulates epithelial cell differentiation, proliferation and survival, thereby playing key roles in tumorigenesis. Promotes invasive migration of cells in which it functions to localize and maintain integrin alpha-V/beta-1 at the tips of extending pseudopodia. Involved in the regulation of epithelial morphogenesis through the control of CLDN4 expression and localization at tight junctions. May selectively regulate the apical recycling pathway. Together with MYO5B regulates transcytosis. The protein is Ras-related protein Rab-25 of Mus musculus (Mouse).